The sequence spans 876 residues: Ergothioneine biosynthesis protein 1 (876 aa).

The tract at residues 36–350 is L-histidine N(alpha)-methyltransferase; that stretch reads IIDIRRVAVE…TYGNEYGLHL (315 aa). Tyrosine 88 serves as a coordination point for L-histidine. Residues glycine 119, lysine 125, and aspartate 146 each contribute to the S-adenosyl-L-methionine site. L-histidine is bound by residues asparagine 202, tyrosine 242, and 315-317; that span reads EQS. Residues 378 to 874 form a hercynylcysteine S-oxide synthase region; sequence ALWATWDVVT…YAWVGARVVR (497 aa). Positions 413, 506, and 510 each coordinate Fe cation. Disordered regions lie at residues 631–650 and 732–761; these read GTTN…QQLP and TNNG…SNTT. Residues 744–758 are compositionally biased toward low complexity; sequence PSSETPAESSSPSDS.

The protein in the N-terminal section; belongs to the methyltransferase superfamily. EgtD family. It in the C-terminal section; belongs to the EgtB family. It depends on Fe(2+) as a cofactor.

It localises to the cytoplasm. The protein resides in the nucleus. It catalyses the reaction L-histidine + 3 S-adenosyl-L-methionine = hercynine + 3 S-adenosyl-L-homocysteine + 3 H(+). The enzyme catalyses hercynine + L-cysteine + O2 = S-(hercyn-2-yl)-L-cysteine S-oxide + H2O. The protein operates within amino-acid biosynthesis; ergothioneine biosynthesis. Catalyzes the SAM-dependent triple methylation of the alpha-amino group of histidine to form hercynine and subsequent conjugation with cysteine and oxygen to form hercynylcysteine sulfoxide, the first two steps in the biosynthesis pathway of ergothioneine. Ergothioneine is an unusual thio-histidine betaine amino acid that acts as an antioxidant against peroxide in conidia and contributes to conidial longevity. The polypeptide is Ergothioneine biosynthesis protein 1 (Neurospora crassa (strain ATCC 24698 / 74-OR23-1A / CBS 708.71 / DSM 1257 / FGSC 987)).